The chain runs to 126 residues: Major sperm protein 1 (126 aa).

Ala2 carries the post-translational modification N-acetylalanine. One can recognise an MSP domain in the interval 8–125 (DIATMPAQKV…RRKNLPIEYN (118 aa)).

In terms of tissue distribution, sperm.

The protein resides in the cell projection. It is found in the pseudopodium. Its subcellular location is the cytoplasm. It localises to the cytoskeleton. In terms of biological role, central component in molecular interactions underlying sperm crawling. Forms an extensive filament system that extends from sperm villipoda, along the leading edge of the pseudopod. This chain is Major sperm protein 1 (MSP-1), found in Globodera rostochiensis (Golden nematode worm).